The primary structure comprises 817 residues: Cargo-transport protein YPP1 (817 aa).

The protein belongs to the YPP1 family. Interacts with ribosomes.

The protein resides in the cytoplasmic granule. It is found in the cell membrane. In terms of biological role, involved in endocytosis. The sequence is that of Cargo-transport protein YPP1 (YPP1) from Saccharomyces cerevisiae (strain ATCC 204508 / S288c) (Baker's yeast).